Here is a 281-residue protein sequence, read N- to C-terminus: BEN domain-containing protein 6 (281 aa).

Disordered regions lie at residues 15 to 62 (VLRK…ETPL) and 143 to 172 (SFAS…PGEK). Residues 19–99 (RKRKRTETAN…RLRQSLVMLQ (81 aa)) adopt a coiled-coil conformation. Residues 143 to 160 (SFASLCSNSNSTSSSPSS) show a composition bias toward low complexity. Residues 162–172 (KAEEEQHPGEK) show a composition bias toward basic and acidic residues. The 101-residue stretch at 171 to 271 (EKQFTIERWQ…NCTKKPNASK (101 aa)) folds into the BEN domain.

As to quaternary structure, interacts (via BEN domain) with RBPJ.

The protein resides in the nucleus. Acts as a corepressor of recombining binding protein suppressor hairless (RBPJ) and inhibits Notch signaling in neural stem cells, thereby opposing their self-renewal and promoting neurogenesis. The protein is BEN domain-containing protein 6 (Bend6) of Mus musculus (Mouse).